Here is a 176-residue protein sequence, read N- to C-terminus: Shikimate kinase (176 aa).

17–24 (GMMGVGKS) is a binding site for ATP.

This sequence belongs to the shikimate kinase family.

The protein localises to the cytoplasm. It catalyses the reaction shikimate + ATP = 3-phosphoshikimate + ADP + H(+). It functions in the pathway metabolic intermediate biosynthesis; chorismate biosynthesis; chorismate from D-erythrose 4-phosphate and phosphoenolpyruvate: step 5/7. This chain is Shikimate kinase, found in Zymomonas mobilis subsp. mobilis (strain ATCC 31821 / ZM4 / CP4).